The chain runs to 374 residues: Dual-specificity RNA methyltransferase RlmN (374 aa).

Glutamate 91 acts as the Proton acceptor in catalysis. The Radical SAM core domain maps to 97–340 (EDDRGTLCVS…TTVRKTRGDD (244 aa)). Residues cysteine 104 and cysteine 345 are joined by a disulfide bond. [4Fe-4S] cluster is bound by residues cysteine 111, cysteine 115, and cysteine 118. Residues 166–167 (GE), serine 198, 220–222 (SLH), and asparagine 302 each bind S-adenosyl-L-methionine. Cysteine 345 acts as the S-methylcysteine intermediate in catalysis.

Belongs to the radical SAM superfamily. RlmN family. Requires [4Fe-4S] cluster as cofactor.

It is found in the cytoplasm. It carries out the reaction adenosine(2503) in 23S rRNA + 2 reduced [2Fe-2S]-[ferredoxin] + 2 S-adenosyl-L-methionine = 2-methyladenosine(2503) in 23S rRNA + 5'-deoxyadenosine + L-methionine + 2 oxidized [2Fe-2S]-[ferredoxin] + S-adenosyl-L-homocysteine. The catalysed reaction is adenosine(37) in tRNA + 2 reduced [2Fe-2S]-[ferredoxin] + 2 S-adenosyl-L-methionine = 2-methyladenosine(37) in tRNA + 5'-deoxyadenosine + L-methionine + 2 oxidized [2Fe-2S]-[ferredoxin] + S-adenosyl-L-homocysteine. In terms of biological role, specifically methylates position 2 of adenine 2503 in 23S rRNA and position 2 of adenine 37 in tRNAs. m2A2503 modification seems to play a crucial role in the proofreading step occurring at the peptidyl transferase center and thus would serve to optimize ribosomal fidelity. The chain is Dual-specificity RNA methyltransferase RlmN from Delftia acidovorans (strain DSM 14801 / SPH-1).